The primary structure comprises 224 residues: Uracil phosphoribosyltransferase (224 aa).

Arg92 lines the 5-phospho-alpha-D-ribose 1-diphosphate pocket. Lys109 is a GTP binding site. 5-phospho-alpha-D-ribose 1-diphosphate is bound by residues Arg117 and 145 to 153 (DPMLATGGT). Residues Ile210 and 215-217 (GDA) each bind uracil. Asp216 serves as a coordination point for 5-phospho-alpha-D-ribose 1-diphosphate.

Belongs to the UPRTase family. Requires Mg(2+) as cofactor.

The enzyme catalyses UMP + diphosphate = 5-phospho-alpha-D-ribose 1-diphosphate + uracil. Its pathway is pyrimidine metabolism; UMP biosynthesis via salvage pathway; UMP from uracil: step 1/1. Allosterically activated by GTP. Functionally, catalyzes the conversion of uracil and 5-phospho-alpha-D-ribose 1-diphosphate (PRPP) to UMP and diphosphate. This is Uracil phosphoribosyltransferase (UPP) from Nicotiana tabacum (Common tobacco).